A 160-amino-acid chain; its full sequence is Putative pre-16S rRNA nuclease (160 aa).

It belongs to the YqgF nuclease family.

It localises to the cytoplasm. Could be a nuclease involved in processing of the 5'-end of pre-16S rRNA. The polypeptide is Putative pre-16S rRNA nuclease (Cereibacter sphaeroides (strain ATCC 17029 / ATH 2.4.9) (Rhodobacter sphaeroides)).